The following is a 481-amino-acid chain: Tryptophan--tRNA ligase, cytoplasmic (481 aa).

The WHEP-TRS domain maps to 12–68; sequence SPLELFNSIAAQGELVRSLKAGNAPKDEIESAVKMLLSLKMNYKTAMGEEYKAGCPP. The segment at 65–85 is disordered; the sequence is GCPPGNSTAGSNGDPDATKAS. K158 is modified (N6-succinyllysine). The short motif at 168–177 is the 'HIGH' region element; sequence PSSEAMHLGH. Residues 353 to 357 carry the 'KMSKS' region motif; it reads KMSAS. Position 355 is a phosphoserine (S355).

The protein belongs to the class-I aminoacyl-tRNA synthetase family. As to quaternary structure, homodimer. Interacts with oxidized form of GAPDH. Proteolytic cleavage generates 2 forms; T1-TrpRS and T2-TrpRS.

The protein resides in the cytoplasm. It catalyses the reaction tRNA(Trp) + L-tryptophan + ATP = L-tryptophyl-tRNA(Trp) + AMP + diphosphate + H(+). Catalyzes the attachment of tryptophan to tRNA(Trp) in a two-step reaction: tryptophan is first activated by ATP to form Trp-AMP and then transferred to the acceptor end of the tRNA(Trp). Could also possess an angiostatic activity. This chain is Tryptophan--tRNA ligase, cytoplasmic, found in Rattus norvegicus (Rat).